Here is a 231-residue protein sequence, read N- to C-terminus: Putative aminodeoxychorismate lyase (231 aa).

The protein belongs to the class-IV pyridoxal-phosphate-dependent aminotransferase family. Requires pyridoxal 5'-phosphate as cofactor.

The protein resides in the cytoplasm. It is found in the nucleus. It catalyses the reaction 4-amino-4-deoxychorismate = 4-aminobenzoate + pyruvate + H(+). Its pathway is cofactor biosynthesis; tetrahydrofolate biosynthesis; 4-aminobenzoate from chorismate: step 2/2. Its function is as follows. Converts 4-amino-4-deoxychorismate into 4-aminobenzoate (PABA) and pyruvate. In Schizosaccharomyces pombe (strain 972 / ATCC 24843) (Fission yeast), this protein is Putative aminodeoxychorismate lyase.